A 1105-amino-acid polypeptide reads, in one-letter code: Integrator complex subunit 2 (1105 aa).

The helical transmembrane segment at 822 to 842 (FVFCSPYLLMILLRILKGSLA) threads the bilayer.

Belongs to the Integrator subunit 2 family. As to quaternary structure, belongs to the multiprotein complex Integrator, at least composed of IntS1, IntS2, IntS3, IntS4, omd/IntS5, IntS6, defl/IntS7, IntS8, IntS9, IntS10, IntS11, IntS12, asun/IntS13, IntS14 and IntS15. The core complex associates with protein phosphatase 2A subunits mts/PP2A and Pp2A-29B, to form the Integrator-PP2A (INTAC) complex.

It is found in the nucleus membrane. It localises to the nucleus. In terms of biological role, component of the integrator complex, a multiprotein complex that terminates RNA polymerase II (Pol II) transcription in the promoter-proximal region of genes. The integrator complex provides a quality checkpoint during transcription elongation by driving premature transcription termination of transcripts that are unfavorably configured for transcriptional elongation: the complex terminates transcription by (1) catalyzing dephosphorylation of the C-terminal domain (CTD) of Pol II subunit Polr2A/Rbp1 and Spt5, and (2) degrading the exiting nascent RNA transcript via endonuclease activity. The integrator complex is also involved in the 3'-end processing of the U7 snRNA, and also the spliceosomal snRNAs U1, U2, U4 and U5. In Drosophila melanogaster (Fruit fly), this protein is Integrator complex subunit 2.